Here is a 507-residue protein sequence, read N- to C-terminus: Maturase K (507 aa).

Belongs to the intron maturase 2 family. MatK subfamily.

Its subcellular location is the plastid. It is found in the chloroplast. Usually encoded in the trnK tRNA gene intron. Probably assists in splicing its own and other chloroplast group II introns. The sequence is that of Maturase K from Liriodendron tulipifera (Tuliptree).